A 604-amino-acid polypeptide reads, in one-letter code: NADH-ubiquinone oxidoreductase chain 5 (604 aa).

16 consecutive transmembrane segments (helical) span residues 2–22, 41–61, 85–105, 115–135, 138–158, 169–189, 209–231, 239–259, 271–291, 299–318, 323–345, 364–384, 411–431, 455–475, 486–506, and 582–602; these read FSSL…LSIF, AFIT…ETII, MIFV…SLWY, FFKY…ANNL, LFIG…WWYG, AILY…WFLF, LPLL…HPWL, TPVS…FLLI, IQSL…ICAL, IIAF…IGIN, AFLH…GSII, MPFT…IPFL, LIAT…ALLG, LLIG…PTTV, LTAL…SLMT, and IKLY…LFNL.

It belongs to the complex I subunit 5 family. In terms of assembly, core subunit of respiratory chain NADH dehydrogenase (Complex I) which is composed of 45 different subunits.

It is found in the mitochondrion inner membrane. It catalyses the reaction a ubiquinone + NADH + 5 H(+)(in) = a ubiquinol + NAD(+) + 4 H(+)(out). Its function is as follows. Core subunit of the mitochondrial membrane respiratory chain NADH dehydrogenase (Complex I) which catalyzes electron transfer from NADH through the respiratory chain, using ubiquinone as an electron acceptor. Essential for the catalytic activity and assembly of complex I. This chain is NADH-ubiquinone oxidoreductase chain 5 (MT-ND5), found in Equus caballus (Horse).